A 373-amino-acid polypeptide reads, in one-letter code: tRNA-specific 2-thiouridylase MnmA (373 aa).

Residues 12-19 and Met38 contribute to the ATP site; that span reads GMSGGVDS. The interaction with target base in tRNA stretch occupies residues 98 to 100; sequence NPD. Cys103 acts as the Nucleophile in catalysis. Cys103 and Cys200 are joined by a disulfide. Residue Gly127 participates in ATP binding. Positions 150 to 152 are interaction with tRNA; it reads KDQ. Cys200 (cysteine persulfide intermediate) is an active-site residue. The tract at residues 312-313 is interaction with tRNA; that stretch reads RY.

Belongs to the MnmA/TRMU family.

It localises to the cytoplasm. The enzyme catalyses S-sulfanyl-L-cysteinyl-[protein] + uridine(34) in tRNA + AH2 + ATP = 2-thiouridine(34) in tRNA + L-cysteinyl-[protein] + A + AMP + diphosphate + H(+). Catalyzes the 2-thiolation of uridine at the wobble position (U34) of tRNA, leading to the formation of s(2)U34. This Streptococcus pyogenes serotype M49 (strain NZ131) protein is tRNA-specific 2-thiouridylase MnmA.